A 410-amino-acid polypeptide reads, in one-letter code: MTKTRILNPTRFPSPKPLRGCGDANFMEQLLLHCATAIDSNDAALTHQILWVLNNIAPPDGDSTQRLTSAFLRALLSRAVSKTPTLSSTISFLPQADELHRFSVVELAAFVDLTPWHRFGFIAANAAILTAVEGYSTVHIVDLSLTHCMQIPTLIDAMASRLNKPPPLLKLTVVSSSDHFPPFINISYEELGSKLVNFATTRNITMEFTIVPSTYSDGFSSLLQQLRIYPSSFNEALVVNCHMMLRYIPEEPLTSSSSSLRTVFLKQLRSLNPRIVTLIEEDVDLTSENLVNRLKSAFNYFWIPFDTTDTFMSEQRRWYEAEISWKIENVVAKEGAERVERTETKRRWIERMREAEFGGVRVKEDAVADVKAMLEEHAVGWGMKKEDDDESLVLTWKGHSVVFATVWVPI.

One can recognise a GRAS domain in the interval Leu18 to Val408. The interval Asn25–Ser88 is leucine repeat I (LRI). The tract at residues Leu107 to Tyr188 is VHIID. The VHIID signature appears at Val138–Asp142. The segment at Glu190–Arg227 is leucine repeat II (LRII). The PFYRE stretch occupies residues Leu237–Asn329. The tract at residues Ala332–Val408 is SAW.

Belongs to the GRAS family. Expressed in seedlings, leaves and flowers.

It localises to the nucleus. Probable transcription factor involved in plant development. In Arabidopsis thaliana (Mouse-ear cress), this protein is Scarecrow-like protein 32 (SCL32).